The chain runs to 255 residues: Hydroxyacylglutathione hydrolase (255 aa).

7 residues coordinate Zn(2+): H56, H58, D60, H61, H114, D133, and H171.

It belongs to the metallo-beta-lactamase superfamily. Glyoxalase II family. As to quaternary structure, monomer. Requires Zn(2+) as cofactor.

It catalyses the reaction an S-(2-hydroxyacyl)glutathione + H2O = a 2-hydroxy carboxylate + glutathione + H(+). It functions in the pathway secondary metabolite metabolism; methylglyoxal degradation; (R)-lactate from methylglyoxal: step 2/2. Thiolesterase that catalyzes the hydrolysis of S-D-lactoyl-glutathione to form glutathione and D-lactic acid. The chain is Hydroxyacylglutathione hydrolase from Chelativorans sp. (strain BNC1).